A 101-amino-acid polypeptide reads, in one-letter code: NAD(P)H-quinone oxidoreductase subunit 4L, chloroplastic (101 aa).

3 consecutive transmembrane segments (helical) span residues 2 to 22 (MLEH…YGLI), 32 to 52 (MCLE…SDFF), and 61 to 81 (IFSI…SAIV).

Belongs to the complex I subunit 4L family. NDH is composed of at least 16 different subunits, 5 of which are encoded in the nucleus.

It localises to the plastid. The protein localises to the chloroplast thylakoid membrane. It carries out the reaction a plastoquinone + NADH + (n+1) H(+)(in) = a plastoquinol + NAD(+) + n H(+)(out). It catalyses the reaction a plastoquinone + NADPH + (n+1) H(+)(in) = a plastoquinol + NADP(+) + n H(+)(out). Functionally, NDH shuttles electrons from NAD(P)H:plastoquinone, via FMN and iron-sulfur (Fe-S) centers, to quinones in the photosynthetic chain and possibly in a chloroplast respiratory chain. The immediate electron acceptor for the enzyme in this species is believed to be plastoquinone. Couples the redox reaction to proton translocation, and thus conserves the redox energy in a proton gradient. In Gossypium barbadense (Sea Island cotton), this protein is NAD(P)H-quinone oxidoreductase subunit 4L, chloroplastic.